The chain runs to 177 residues: Small ribosomal subunit protein bS21m (177 aa).

The N-terminal 17 residues, 1–17, are a transit peptide targeting the mitochondrion; that stretch reads MLKSTLRLSRISLRRGF.

Belongs to the bacterial ribosomal protein bS21 family. Component of the mitochondrial small ribosomal subunit (mt-SSU). Mature yeast 74S mitochondrial ribosomes consist of a small (37S) and a large (54S) subunit. The 37S small subunit contains a 15S ribosomal RNA (15S mt-rRNA) and 34 different proteins. The 54S large subunit contains a 21S rRNA (21S mt-rRNA) and 46 different proteins.

It localises to the mitochondrion. In terms of biological role, component of the mitochondrial ribosome (mitoribosome), a dedicated translation machinery responsible for the synthesis of mitochondrial genome-encoded proteins, including at least some of the essential transmembrane subunits of the mitochondrial respiratory chain. The mitoribosomes are attached to the mitochondrial inner membrane and translation products are cotranslationally integrated into the membrane. This Saccharomyces cerevisiae (strain ATCC 204508 / S288c) (Baker's yeast) protein is Small ribosomal subunit protein bS21m (MRP21).